Consider the following 136-residue polypeptide: DNA-directed RNA polymerase subunit omega (136 aa).

Belongs to the RNA polymerase subunit omega family. As to quaternary structure, the RNAP catalytic core consists of 2 alpha, 1 beta, 1 beta' and 1 omega subunit. When a sigma factor is associated with the core the holoenzyme is formed, which can initiate transcription.

It catalyses the reaction RNA(n) + a ribonucleoside 5'-triphosphate = RNA(n+1) + diphosphate. Promotes RNA polymerase assembly. Latches the N- and C-terminal regions of the beta' subunit thereby facilitating its interaction with the beta and alpha subunits. This chain is DNA-directed RNA polymerase subunit omega, found in Methylorubrum extorquens (strain CM4 / NCIMB 13688) (Methylobacterium extorquens).